The primary structure comprises 711 residues: Nucleolin (711 aa).

Residues 1-304 (MVKLAKAGKN…KKQKVEGTEP (304 aa)) are disordered. Lys9, Lys15, and Lys16 each carry N6-acetyllysine. The span at 24–43 (VEEDSEDEEMSEDEEDDSSG) shows a compositional bias: acidic residues. Residues Ser28, Ser34, Ser41, and Ser42 each carry the phosphoserine modification. Positions 56-107 (AAATSAKKVVVSPTKKVAVATPAKKAAVTPGKKAAATPAKKTVTPAKAVATP) are enriched in low complexity. Residues 58–65 (ATSAKKVV) form repeat 1. The interval 58-135 (ATSAKKVVVS…GAAIPAKGAK (78 aa)) is 8 X 8 AA tandem repeats of X-T-P-X-K-K-X-X. A Phosphoserine modification is found at Ser67. A phosphothreonine mark is found at Thr69, Thr76, Thr84, and Thr92. A run of 3 repeats spans residues 75 to 82 (ATPAKKAA), 83 to 90 (VTPGKKAA), and 91 to 98 (ATPAKKTV). The residue at position 96 (Lys96) is an N6-acetyllysine. Position 99 is a phosphothreonine (Thr99). A 5; truncated repeat occupies 99 to 104 (TPAKAV). Lys102 is subject to N6-acetyllysine. Repeat 6 spans residues 105-112 (ATPGKKGA). Thr106 bears the Phosphothreonine mark. Lys109 bears the N6-acetyllysine mark. Thr113 is subject to Phosphothreonine. Lys116 is subject to N6-acetyllysine. 2 repeat units span residues 120-127 (ATPGKKGA) and 128-135 (AIPAKGAK). At Thr121 the chain carries Phosphothreonine. Over residues 122–137 (PGKKGAAIPAKGAKNG) the composition is skewed to low complexity. Lys124 carries the N6-acetyllysine modification. 4 positions are modified to phosphoserine: Ser145, Ser153, Ser184, and Ser207. Composition is skewed to acidic residues over residues 145–171 (SDEEEEDDSEEDDEDDEDEDEDEDEIE) and 184–212 (SEDEDDEDDEDDEDEDDDDEEDDSEEEAM). Thr215 bears the Phosphothreonine mark. A compositionally biased stretch (acidic residues) spans 235-273 (EDEDEEEDDEDEDDDDDEDDEDEDDDDEDEEEEEEEEEP). Residues 274–301 (VKEAPGKRKKEMAKQKAAPEAKKQKVEG) are compositionally biased toward basic and acidic residues. Lys298 is covalently cross-linked (Glycyl lysine isopeptide (Lys-Gly) (interchain with G-Cter in SUMO1); alternate). A Glycyl lysine isopeptide (Lys-Gly) (interchain with G-Cter in SUMO2); alternate cross-link involves residue Lys298. Thr302 is modified (phosphothreonine). RRM domains follow at residues 308 to 384 (FNLF…KPKG) and 394 to 467 (RTLL…YTGE). Lys319 carries the N6-acetyllysine modification. A Glycyl lysine isopeptide (Lys-Gly) (interchain with G-Cter in SUMO1); alternate cross-link involves residue Lys325. Residue Lys325 forms a Glycyl lysine isopeptide (Lys-Gly) (interchain with G-Cter in SUMO2); alternate linkage. Lys349 carries the post-translational modification N6-acetyllysine. Ser357 carries the phosphoserine modification. Thr368 is modified (phosphothreonine). Lys371 is covalently cross-linked (Glycyl lysine isopeptide (Lys-Gly) (interchain with G-Cter in SUMO2)). A Glycyl lysine isopeptide (Lys-Gly) (interchain with G-Cter in SUMO2); alternate cross-link involves residue Lys378. At Lys378 the chain carries N6-acetyllysine; alternate. Lys399 and Lys404 each carry N6-acetyllysine. Phosphothreonine is present on Thr406. 2 positions are modified to N6-acetyllysine: Lys428 and Lys445. 2 positions are modified to phosphoserine: Ser459 and Ser461. N6-acetyllysine occurs at positions 468 and 478. An RRM 3 domain is found at 487–561 (KTLVLSNLSY…RAIRLELQGP (75 aa)). Residue Lys514 forms a Glycyl lysine isopeptide (Lys-Gly) (interchain with G-Cter in SUMO2); alternate linkage. At Lys514 the chain carries N6-acetyllysine; alternate. Lys522 carries the N6-acetyllysine modification. At Ser564 the chain carries Phosphoserine. Lys573 bears the N6-acetyllysine mark. Positions 573-648 (KTLFVKGLSE…NKVTLDWAKP (76 aa)) constitute an RRM 4 domain. Lys578 is covalently cross-linked (Glycyl lysine isopeptide (Lys-Gly) (interchain with G-Cter in SUMO2); alternate). At Lys578 the chain carries N6-acetyllysine; alternate. Ser581 bears the Phosphoserine mark. Lys590 is covalently cross-linked (Glycyl lysine isopeptide (Lys-Gly) (interchain with G-Cter in SUMO1); alternate). A Glycyl lysine isopeptide (Lys-Gly) (interchain with G-Cter in SUMO2); alternate cross-link involves residue Lys590. Residues Ser592 and Ser620 each carry the phosphoserine modification. A Glycyl lysine isopeptide (Lys-Gly) (interchain with G-Cter in SUMO2) cross-link involves residue Lys625. A disordered region spans residues 641-711 (VTLDWAKPKG…KPQGKKTKFE (71 aa)). Lys647 is subject to N6-acetyllysine. Over residues 651–697 (EGGFGGRGGGRGGFGGRGGGRGGRGGFGGRGRGGFGGRGGFRGGRGG) the composition is skewed to gly residues. 9 positions are modified to asymmetric dimethylarginine: Arg657, Arg661, Arg667, Arg671, Arg674, Arg680, Arg682, Arg688, and Arg692. Arg695 carries the post-translational modification Asymmetric dimethylarginine; alternate. Omega-N-methylarginine; alternate is present on Arg695. Residues 698-711 (GGDHKPQGKKTKFE) are compositionally biased toward basic and acidic residues.

As to quaternary structure, identified in a IGF2BP1-dependent mRNP granule complex containing untranslated mRNAs. Component of the SWAP complex that consists of NPM1, NCL/nucleolin, PARP1 and SWAP70. Component of a complex which is at least composed of HTATSF1/Tat-SF1, the P-TEFb complex components CDK9 and CCNT1, RNA polymerase II, SUPT5H, and NCL/nucleolin. Interacts with AICDA. Interacts with APTX. Interacts with C1QBP. Interacts with ERBB4. Interacts (via C-terminus) with FMR1 isoform 6 (via N-terminus). Interacts with GZF1; this interaction is important for nucleolar localization of GZF1. Interacts with NSUN2. Interacts with NVL. Interacts (via N-terminus domain) with SETX. Interacts (via RRM1 and C-terminal RRM4/Arg/Gly-rich domains) with TERT; the interaction is important for nucleolar localization of TERT. Interacts with WDR46. Interacts with ZFP36. Interacts with LRRC34. Interacts with RRP1B. Interacts with HNRNPU; this interaction occurs during mitosis. Interacts with RIOK1; RIOK1 recruits NCL to PRMT5 for symmetrically methylation. Interacts with ZBTB7B. Interacts with MDK; this interaction promotes NCL clustering and lateral movements of this complex into lipid rafts leading to MDK internalization. Interacts with HDGF. Interacts with ALKBH2. Interacts with IGFBP5; this interaction is necessary for IGFBP5 localization to the nucleus. Post-translationally, some glutamate residues are glycylated by TTLL8. This modification occurs exclusively on glutamate residues and results in a glycine chain on the gamma-carboxyl group. Symmetrically methylated by PRMT5.

The protein resides in the nucleus. Its subcellular location is the nucleolus. It localises to the cytoplasm. Functionally, nucleolin is the major nucleolar protein of growing eukaryotic cells. It is found associated with intranucleolar chromatin and pre-ribosomal particles. It induces chromatin decondensation by binding to histone H1. It is thought to play a role in pre-rRNA transcription and ribosome assembly. May play a role in the process of transcriptional elongation. Binds RNA oligonucleotides with 5'-UUAGGG-3' repeats more tightly than the telomeric single-stranded DNA 5'-TTAGGG-3' repeats. This is Nucleolin (NCL) from Macaca fascicularis (Crab-eating macaque).